Here is a 397-residue protein sequence, read N- to C-terminus: 1-deoxy-D-xylulose 5-phosphate reductoisomerase (397 aa).

8 residues coordinate NADPH: threonine 12, glycine 13, serine 14, isoleucine 15, glycine 38, lysine 39, asparagine 40, and asparagine 126. Lysine 127 serves as a coordination point for 1-deoxy-D-xylulose 5-phosphate. Residue glutamate 128 coordinates NADPH. Aspartate 152 contributes to the Mn(2+) binding site. 4 residues coordinate 1-deoxy-D-xylulose 5-phosphate: serine 153, glutamate 154, serine 188, and histidine 211. Glutamate 154 is a Mn(2+) binding site. NADPH is bound at residue glycine 217. 4 residues coordinate 1-deoxy-D-xylulose 5-phosphate: serine 224, asparagine 229, lysine 230, and glutamate 233. Glutamate 233 provides a ligand contact to Mn(2+).

It belongs to the DXR family. Requires Mg(2+) as cofactor. The cofactor is Mn(2+).

It catalyses the reaction 2-C-methyl-D-erythritol 4-phosphate + NADP(+) = 1-deoxy-D-xylulose 5-phosphate + NADPH + H(+). It functions in the pathway isoprenoid biosynthesis; isopentenyl diphosphate biosynthesis via DXP pathway; isopentenyl diphosphate from 1-deoxy-D-xylulose 5-phosphate: step 1/6. In terms of biological role, catalyzes the NADPH-dependent rearrangement and reduction of 1-deoxy-D-xylulose-5-phosphate (DXP) to 2-C-methyl-D-erythritol 4-phosphate (MEP). The protein is 1-deoxy-D-xylulose 5-phosphate reductoisomerase of Haemophilus influenzae (strain 86-028NP).